A 266-amino-acid chain; its full sequence is Glucosamine-6-phosphate deaminase (266 aa).

Asp72 functions as the Proton acceptor; for enolization step in the catalytic mechanism. Asp141 (for ring-opening step) is an active-site residue. Catalysis depends on His143, which acts as the Proton acceptor; for ring-opening step. Glu148 acts as the For ring-opening step in catalysis.

This sequence belongs to the glucosamine/galactosamine-6-phosphate isomerase family. NagB subfamily. As to quaternary structure, homohexamer.

It carries out the reaction alpha-D-glucosamine 6-phosphate + H2O = beta-D-fructose 6-phosphate + NH4(+). It functions in the pathway amino-sugar metabolism; N-acetylneuraminate degradation; D-fructose 6-phosphate from N-acetylneuraminate: step 5/5. Allosterically activated by N-acetylglucosamine 6-phosphate (GlcNAc6P). Catalyzes the reversible isomerization-deamination of glucosamine 6-phosphate (GlcN6P) to form fructose 6-phosphate (Fru6P) and ammonium ion. The polypeptide is Glucosamine-6-phosphate deaminase (Aeromonas salmonicida (strain A449)).